The sequence spans 400 residues: Tyrosine--tRNA ligase 2 (400 aa).

Residues 46–55 carry the 'HIGH' region motif; that stretch reads PSAPDIHLGH. The short motif at 230-234 is the 'KMSKS' region element; it reads KMSKS. Lysine 233 lines the ATP pocket. The S4 RNA-binding domain occupies 339–399; sequence NNLIEAIVKI…GKKKIVKLLV (61 aa).

The protein belongs to the class-I aminoacyl-tRNA synthetase family. TyrS type 2 subfamily. Homodimer.

It is found in the cytoplasm. The enzyme catalyses tRNA(Tyr) + L-tyrosine + ATP = L-tyrosyl-tRNA(Tyr) + AMP + diphosphate + H(+). Catalyzes the attachment of tyrosine to tRNA(Tyr) in a two-step reaction: tyrosine is first activated by ATP to form Tyr-AMP and then transferred to the acceptor end of tRNA(Tyr). The protein is Tyrosine--tRNA ligase 2 of Clostridium acetobutylicum (strain ATCC 824 / DSM 792 / JCM 1419 / IAM 19013 / LMG 5710 / NBRC 13948 / NRRL B-527 / VKM B-1787 / 2291 / W).